Reading from the N-terminus, the 232-residue chain is Rho-related GTP-binding protein Rho6 (232 aa).

GTP is bound by residues 23-28 (QCGKTA), 38-45 (YPETYVPT), 67-71 (DTSGS), 125-128 (CKTD), and 169-170 (AF). Positions 42–50 (YVPTVFENY) match the Effector region motif. Cys-229 bears the Cysteine methyl ester mark. Cys-229 carries S-geranylgeranyl cysteine lipidation. The propeptide at 230–232 (SIM) is removed in mature form.

It belongs to the small GTPase superfamily. Rho family. In terms of assembly, binds GRB7 and PLXNB1. Interacts with UBXD5. Interacts with PLXNA2. As to expression, mostly expressed in brain and liver.

It is found in the cell membrane. It localises to the cytoplasm. The protein resides in the cytoskeleton. Functionally, lacks intrinsic GTPase activity. Has a low affinity for GDP, and constitutively binds GTP. Controls rearrangements of the actin cytoskeleton. Induces the Rac-dependent neuritic process formation in part by disruption of the cortical actin filaments. Causes the formation of many neuritic processes from the cell body with disruption of the cortical actin filaments. This is Rho-related GTP-binding protein Rho6 (RND1) from Homo sapiens (Human).